Consider the following 111-residue polypeptide: C-type lectin lectoxin-Enh2 (111 aa).

The N-terminal stretch at 1–23 is a signal peptide; sequence MGQFTVVSLGLLAMFLSLSGAKG. An intrachain disulfide couples C26 to C37. One can recognise a C-type lectin domain in the interval 33-108; the sequence is RNGVCNKLFP…CASLHPFICQ (76 aa). The Mannose-binding signature appears at 72–74; it reads EPN. Ca(2+) contacts are provided by E80, N95, and D96. C82 and C99 are oxidised to a cystine.

The protein belongs to the true venom lectin family. As to expression, expressed by the venom gland.

It is found in the secreted. Its function is as follows. Mannose-binding lectin which recognizes specific carbohydrate structures and agglutinates a variety of animal cells by binding to cell-surface glycoproteins and glycolipids. May be a calcium-dependent lectin. In Pseudoferania polylepis (Macleay's water snake), this protein is C-type lectin lectoxin-Enh2.